Reading from the N-terminus, the 472-residue chain is MNAVTDLKQDYLVADISLAGWGRKEIAIAETEMPGLMAIRDEFAAAQPLKGARIAGSLHMTIQTAVLIETLKALGADVRWASCNIFSTQDHAAAAIAAGGTPVFAFKGESLKEYWDFTHRIFDWVDGGTPNMILDDGGDATLLLHLGAKAEKDASLIANPGSEEETFLFAAIKEKLAKDPSWYSRNLAAIRGVTEETTTGVHRLYQMAQKGDLKFPAINVNDSVTKSKFDNLYGCRESLVDGIKRATDVMIAGKIAIVAGYGDVGKGSAQALRALSAQVWVTEIDPICALQAAMEGYRVVTMDYAAEHGDIFVTCTGNYHVITHDHMARMKDQAIVCNIGHFDNEIDIASIEKYEWDEIKPQVDHVKFPDGKKIIILAKGRLVNLGCATGHPSYVMSSSFANQTIAQIELWQERDSGKYPVGVYTLPKHLDEKVARLQLRKLNAQLTELTEQQAAYIGVKKEGPYKADHYRY.

Substrate contacts are provided by Thr-61, Asp-136, and Glu-196. 197 to 199 (TTT) provides a ligand contact to NAD(+). Residues Lys-226 and Asp-230 each coordinate substrate. NAD(+)-binding positions include Asn-231, 260–265 (GYGDVG), Glu-283, Asn-318, 339–341 (IGH), and Asn-384.

Belongs to the adenosylhomocysteinase family. The cofactor is NAD(+).

The protein resides in the cytoplasm. The catalysed reaction is S-adenosyl-L-homocysteine + H2O = L-homocysteine + adenosine. The protein operates within amino-acid biosynthesis; L-homocysteine biosynthesis; L-homocysteine from S-adenosyl-L-homocysteine: step 1/1. Its function is as follows. May play a key role in the regulation of the intracellular concentration of adenosylhomocysteine. This Cupriavidus pinatubonensis (strain JMP 134 / LMG 1197) (Cupriavidus necator (strain JMP 134)) protein is Adenosylhomocysteinase.